Reading from the N-terminus, the 416-residue chain is 1-deoxy-D-xylulose 5-phosphate reductoisomerase (416 aa).

NADPH-binding residues include Thr10, Gly11, Ser12, Ile13, Gly36, Arg37, Asn38, and Asn130. Lys131 is a binding site for 1-deoxy-D-xylulose 5-phosphate. NADPH is bound at residue Glu132. Mn(2+) is bound at residue Asp156. 4 residues coordinate 1-deoxy-D-xylulose 5-phosphate: Ser157, Glu158, Ser194, and His217. A Mn(2+)-binding site is contributed by Glu158. Residue Gly223 coordinates NADPH. 1-deoxy-D-xylulose 5-phosphate is bound by residues Ser230, Asn235, Lys236, and Glu239. Glu239 contacts Mn(2+).

Belongs to the DXR family. Mg(2+) is required as a cofactor. Requires Mn(2+) as cofactor.

The catalysed reaction is 2-C-methyl-D-erythritol 4-phosphate + NADP(+) = 1-deoxy-D-xylulose 5-phosphate + NADPH + H(+). It participates in isoprenoid biosynthesis; isopentenyl diphosphate biosynthesis via DXP pathway; isopentenyl diphosphate from 1-deoxy-D-xylulose 5-phosphate: step 1/6. In terms of biological role, catalyzes the NADPH-dependent rearrangement and reduction of 1-deoxy-D-xylulose-5-phosphate (DXP) to 2-C-methyl-D-erythritol 4-phosphate (MEP). The protein is 1-deoxy-D-xylulose 5-phosphate reductoisomerase of Synechococcus sp. (strain CC9311).